The sequence spans 165 residues: Small ribosomal subunit protein bS16 (165 aa).

It belongs to the bacterial ribosomal protein bS16 family.

This Azobacteroides pseudotrichonymphae genomovar. CFP2 protein is Small ribosomal subunit protein bS16.